Here is a 675-residue protein sequence, read N- to C-terminus: DNA ligase (675 aa).

Residues aspartate 36–aspartate 40, serine 85–leucine 86, and glutamate 118 contribute to the NAD(+) site. The active-site N6-AMP-lysine intermediate is the lysine 120. NAD(+) contacts are provided by arginine 141, glutamate 178, lysine 298, and lysine 322. The Zn(2+) site is built by cysteine 416, cysteine 419, cysteine 434, and cysteine 439. Positions threonine 598–glutamine 675 constitute a BRCT domain.

Belongs to the NAD-dependent DNA ligase family. LigA subfamily. Mg(2+) serves as cofactor. Mn(2+) is required as a cofactor.

It catalyses the reaction NAD(+) + (deoxyribonucleotide)n-3'-hydroxyl + 5'-phospho-(deoxyribonucleotide)m = (deoxyribonucleotide)n+m + AMP + beta-nicotinamide D-nucleotide.. DNA ligase that catalyzes the formation of phosphodiester linkages between 5'-phosphoryl and 3'-hydroxyl groups in double-stranded DNA using NAD as a coenzyme and as the energy source for the reaction. It is essential for DNA replication and repair of damaged DNA. In Acaryochloris marina (strain MBIC 11017), this protein is DNA ligase.